We begin with the raw amino-acid sequence, 236 residues long: 15,16-dihydrobiliverdin:ferredoxin oxidoreductase (236 aa).

The protein belongs to the HY2 family.

The enzyme catalyses 15,16-dihydrobiliverdin + oxidized 2[4Fe-4S]-[ferredoxin] = biliverdin IXalpha + reduced 2[4Fe-4S]-[ferredoxin] + 2 H(+). Functionally, catalyzes the two-electron reduction of biliverdin IX-alpha at the C15 methine bridge. The protein is 15,16-dihydrobiliverdin:ferredoxin oxidoreductase of Prochlorococcus marinus (strain MIT 9312).